Here is a 182-residue protein sequence, read N- to C-terminus: MEERCFRLGIKTNYKKEIFMILNNKQNKTEFIVSKMDELVNWARKGSLWPMTFGLACCAVEMMHSAASRYDLDRFGIIFRPSPRQSDVMIVAGTLTNKMAPALRKVYDQMSEPRWVVSMGSCANGGGYYHYSYSVVRGCDRIVPVDIYVPGCPPTAEALLYGLLQLQKKIKRSRKTLYWLQK.

Residues Cys-57, Cys-58, Cys-122, and Cys-152 each coordinate [4Fe-4S] cluster.

The protein belongs to the complex I 20 kDa subunit family. It depends on [4Fe-4S] cluster as a cofactor.

It is found in the mitochondrion. The catalysed reaction is a ubiquinone + NADH + 5 H(+)(in) = a ubiquinol + NAD(+) + 4 H(+)(out). This Reclinomonas americana protein is NADH-ubiquinone oxidoreductase 20 kDa subunit (NAD10).